The sequence spans 445 residues: Trimethylamine monooxygenase (445 aa).

6 residues coordinate FAD: S14, E39, Q41, L47, W48, and H64. Residues W72 and N74 each contribute to the NADP(+) site. FAD is bound by residues N74 and V127. Positions 204, 205, 207, and 228 each coordinate NADP(+). Q317 and T320 together coordinate FAD. R411 contributes to the NADP(+) binding site.

It belongs to the FMO family. FAD serves as cofactor.

It catalyses the reaction trimethylamine + NADPH + O2 = trimethylamine N-oxide + NADP(+) + H2O. In terms of biological role, catalyzes the oxidation of trimethylamine (TMA) to produce trimethylamine N-oxide (TMAO). In vitro, has a broad substrate specificity, oxidizing many nitrogen- and sulfur-containing compounds, including dimethylamine (DMA), dimethylsulfide (DMS) and dimethylsulfoxide (DMSO). The chain is Trimethylamine monooxygenase from Roseovarius sp. (strain 217).